Reading from the N-terminus, the 408-residue chain is LL-diaminopimelate aminotransferase (408 aa).

Residues Y15 and G42 each contribute to the substrate site. Pyridoxal 5'-phosphate contacts are provided by residues Y72, 108-109, Y132, N187, Y218, and 246-248; these read SK and SFS. 3 residues coordinate substrate: K109, Y132, and N187. K249 carries the N6-(pyridoxal phosphate)lysine modification. 2 residues coordinate pyridoxal 5'-phosphate: R257 and N292. Substrate-binding residues include N292 and R388.

This sequence belongs to the class-I pyridoxal-phosphate-dependent aminotransferase family. LL-diaminopimelate aminotransferase subfamily. As to quaternary structure, homodimer. Requires pyridoxal 5'-phosphate as cofactor.

The enzyme catalyses (2S,6S)-2,6-diaminopimelate + 2-oxoglutarate = (S)-2,3,4,5-tetrahydrodipicolinate + L-glutamate + H2O + H(+). It participates in amino-acid biosynthesis; L-lysine biosynthesis via DAP pathway; LL-2,6-diaminopimelate from (S)-tetrahydrodipicolinate (aminotransferase route): step 1/1. Functionally, involved in the synthesis of meso-diaminopimelate (m-DAP or DL-DAP), required for both lysine and peptidoglycan biosynthesis. Catalyzes the direct conversion of tetrahydrodipicolinate to LL-diaminopimelate. This is LL-diaminopimelate aminotransferase from Prochlorococcus marinus (strain MIT 9312).